The chain runs to 360 residues: MSIHVKLHLGYQDFALDLDLQLPGRGVTALYGHSGSGKTTCLRCIAGLEKAGRGRIQINDEVWQDSQRKLFVPPHKRSLGYVFQEASLFAHLSVQANLEFGLRRIAKAQRRVDMAQATELLGIGHLLQRHPQHLSGGERQRIGIARALLTSPRLLLMDEPLAALDSKRKSEILPYLERLHDELDIPVLYVSHSQDEVARLADHIVLLSDGRALASGPVGETLARLDLPLALGDDAGVVVEGRVSHYDPDYQLLTLQLPGSQLTIRVAHEPLALGKALRFKVQARDVSLSLQDSEHSSILNRLPVTVRDEIPADNAAHVLVRLDVAGSPLLARITRFSRDQLSLHPGQQLWAQIKAVAVLA.

Positions 5–234 (VKLHLGYQDF…LDLPLALGDD (230 aa)) constitute an ABC transporter domain. An ATP-binding site is contributed by 32–39 (GHSGSGKT). The Mop domain maps to 295-360 (HSSILNRLPV…AQIKAVAVLA (66 aa)).

It belongs to the ABC transporter superfamily. Molybdate importer (TC 3.A.1.8) family. The complex is composed of two ATP-binding proteins (ModC), two transmembrane proteins (ModB) and a solute-binding protein (ModA).

The protein localises to the cell inner membrane. It catalyses the reaction molybdate(out) + ATP + H2O = molybdate(in) + ADP + phosphate + H(+). Its function is as follows. Part of the ABC transporter complex ModABC involved in molybdenum import. Responsible for energy coupling to the transport system. In Pseudomonas fluorescens (strain ATCC BAA-477 / NRRL B-23932 / Pf-5), this protein is Molybdenum import ATP-binding protein ModC.